Here is a 666-residue protein sequence, read N- to C-terminus: Neurexin-2-beta (666 aa).

Over residues 1-10 (MPPGGSGPGG) the composition is skewed to gly residues. The interval 1–30 (MPPGGSGPGGCPRRPPALAGPLPPPPPPPP) is disordered. The N-terminal stretch at 1 to 50 (MPPGGSGPGGCPRRPPALAGPLPPPPPPPPPPLLPLLPLLLLLLLGAAEG) is a signal peptide. A compositionally biased stretch (pro residues) spans 21 to 30 (PLPPPPPPPP). At 51 to 590 (ARVSSSLSTT…EVIRESSSTT (540 aa)) the chain is on the extracellular side. The region spanning 91–299 (TTYIFGKGGA…HLRLVGEGPS (209 aa)) is the Laminin G-like domain. Ca(2+)-binding residues include Asp143 and Val160. An N-linked (GlcNAc...) asparagine glycan is attached at Asn190. The Ca(2+) site is built by Ile242 and Asn244. The segment at 327–346 (ATTTTRRGRSPTLRDSTTQN) is disordered. Ser354 carries an O-linked (Xyl...) (heparan sulfate) serine glycan. 2 disordered regions span residues 412-443 (ATQDTLPPPAARRPPSGGPCQAERDDSDCEEP) and 479-580 (TLLS…PGAV). The helical transmembrane segment at 591 to 611 (GMVVGIVAAAALCILILLYAM) threads the bilayer. The Cytoplasmic portion of the chain corresponds to 612–666 (YKYRNRDEGSYQVDQSRNYISNSAQSNGAVVKEKAPAAPKTPSKAKKNKDKEYYV). The tract at residues 633 to 666 (NSAQSNGAVVKEKAPAAPKTPSKAKKNKDKEYYV) is disordered.

Belongs to the neurexin family. Interacts (via cytoplasmic C-terminal region) with CASK. Specific isoforms bind alpha-dystroglycan and neuroligins NLGN1, NLGN2 and NLGN3. Interacts with CBLN1, CBLN2 and, less avidly, with CBLN4. Interacts with CLSTN3. O-glycosylated; contains heparan sulfate. Heparan sulfate attachment is required for synapse development by mediating interactions with neuroligins.

Its subcellular location is the presynaptic cell membrane. Neuronal cell surface protein that may be involved in cell recognition and cell adhesion. This chain is Neurexin-2-beta (NRXN2), found in Homo sapiens (Human).